A 514-amino-acid polypeptide reads, in one-letter code: 23S rRNA (uracil(1939)-C(5))-methyltransferase RlmD (514 aa).

[4Fe-4S] cluster contacts are provided by cysteine 70, cysteine 76, cysteine 79, and cysteine 158. Residues glutamine 272, phenylalanine 301, asparagine 306, glutamate 322, asparagine 350, and aspartate 371 each contribute to the S-adenosyl-L-methionine site. Cysteine 398 serves as the catalytic Nucleophile.

Belongs to the class I-like SAM-binding methyltransferase superfamily. RNA M5U methyltransferase family. RlmD subfamily.

It carries out the reaction uridine(1939) in 23S rRNA + S-adenosyl-L-methionine = 5-methyluridine(1939) in 23S rRNA + S-adenosyl-L-homocysteine + H(+). Catalyzes the formation of 5-methyl-uridine at position 1939 (m5U1939) in 23S rRNA. This is 23S rRNA (uracil(1939)-C(5))-methyltransferase RlmD from Chromobacterium violaceum (strain ATCC 12472 / DSM 30191 / JCM 1249 / CCUG 213 / NBRC 12614 / NCIMB 9131 / NCTC 9757 / MK).